Reading from the N-terminus, the 362-residue chain is Atypical chemokine receptor 3 (362 aa).

Residues 1-47 (MDVHLFDYVEPGNYSDINWPCNSSDCIVVDTVQCPAMPNKNVLLYTL) lie on the Extracellular side of the membrane. Residues Asn13 and Asn22 are each glycosylated (N-linked (GlcNAc...) asparagine). A helical transmembrane segment spans residues 48 to 68 (SFIYIFIFVIGMIANSVVVWV). Residues 69–81 (NIQAKTTGYDTHC) are Cytoplasmic-facing. A helical transmembrane segment spans residues 82–102 (YILNLAIADLWVVITIPVWVV). The Extracellular portion of the chain corresponds to 103-118 (SLVQHNQWPMGELTCK). A disulfide bridge connects residues Cys117 and Cys196. The chain crosses the membrane as a helical span at residues 119 to 139 (ITHLIFSINLFGSIFFLACMS). At 140-162 (VDRYLSITYFTSTSSYKKKMVRR) the chain is on the cytoplasmic side. The helical transmembrane segment at 163–183 (VVCVLVWLLAFFVSLPDTYYL) threads the bilayer. Residues 184 to 213 (KTVTSASNNETYCRSFYPEHSIKEWLIGME) lie on the Extracellular side of the membrane. Residues 214–234 (LVSVILGFAVPFTIIAIFYFL) traverse the membrane as a helical segment. Residues 235–252 (LARAMSASGDQEKHSSRK) lie on the Cytoplasmic side of the membrane. Residues 253-273 (IIFSYVVVFLVCWLPYHFVVL) form a helical membrane-spanning segment. Over 274–296 (LDIFSILHYIPFTCQLENVLFTA) the chain is Extracellular. A helical membrane pass occupies residues 297-319 (LHVTQCLSLVHCCVNPVLYSFIN). Residues 320 to 362 (RNYRYELMKAFIFKYSAKTGLTKLIDASRVSETEYSALEQNTK) lie on the Cytoplasmic side of the membrane. Positions 324–362 (YELMKAFIFKYSAKTGLTKLIDASRVSETEYSALEQNTK) are C-terminal cytoplasmic tail. Ser347, Ser350, and Ser355 each carry phosphoserine.

The protein belongs to the G-protein coupled receptor 1 family. Atypical chemokine receptor subfamily. As to quaternary structure, homodimer. Can form heterodimers with CXCR4; heterodimerization may regulate CXCR4 signaling activity. Interacts with ARRB1 and ARRB2. Post-translationally, the Ser/Thr residues in the C-terminal cytoplasmic tail may be phosphorylated. In terms of processing, ubiquitinated at the Lys residues in its C-terminal cytoplasmic tail and is essential for correct trafficking from and to the cell membrane. Deubiquitinated by CXCL12-stimulation in a reversible manner. Expressed in vascular smooth muscle cells (at protein level). In brain, expressed in blood vessels, pyramidal cells in hippocampal subfield CA3, mature dentate gyrus granule cells, ventricle walls, olfactory bulb, accumbens shell, supraoptic, lateroanterior and ventromedial hypothalamic nuclei, medial region of thalamus, and motor nuclei, central gray and raphe magnus nucleus of brain stem. Detected in primary neurons, GABAergic neurons, astrocytes, cerebral cortex, ventral striatum and choroid plexus. Not detected in mesencephalon.

Its subcellular location is the cell membrane. It localises to the early endosome. The protein resides in the recycling endosome. Functionally, atypical chemokine receptor that controls chemokine levels and localization via high-affinity chemokine binding that is uncoupled from classic ligand-driven signal transduction cascades, resulting instead in chemokine sequestration, degradation, or transcytosis. Also known as interceptor (internalizing receptor) or chemokine-scavenging receptor or chemokine decoy receptor. Acts as a receptor for chemokines CXCL11 and CXCL12/SDF1. Chemokine binding does not activate G-protein-mediated signal transduction but instead induces beta-arrestin recruitment, leading to ligand internalization and activation of MAPK signaling pathway. Required for regulation of CXCR4 protein levels in migrating interneurons, thereby adapting their chemokine responsiveness. In glioma cells, transduces signals via MEK/ERK pathway, mediating resistance to apoptosis. Promotes cell growth and survival. Not involved in cell migration, adhesion or proliferation of normal hematopoietic progenitors but activated by CXCL11 in malignant hemapoietic cells, leading to phosphorylation of ERK1/2 (MAPK3/MAPK1) and enhanced cell adhesion and migration. Plays a regulatory role in CXCR4-mediated activation of cell surface integrins by CXCL12. Required for heart valve development. Atypical chemokine receptor that controls chemokine levels and localization via high-affinity chemokine binding that is uncoupled from classic ligand-driven signal transduction cascades, resulting instead in chemokine sequestration, degradation, or transcytosis. Also known as interceptor (internalizing receptor) or chemokine-scavenging receptor or chemokine decoy receptor. Acts as a receptor for chemokines CXCL11 and CXCL12/SDF1. Chemokine binding does not activate G-protein-mediated signal transduction but instead induces beta-arrestin recruitment, leading to ligand internalization and activation of MAPK signaling pathway. Required for regulation of CXCR4 protein levels in migrating interneurons, thereby adapting their chemokine responsiveness. In glioma cells, transduces signals via MEK/ERK pathway, mediating resistance to apoptosis. Promotes cell growth and survival. Not involved in cell migration, adhesion or proliferation of normal hematopoietic progenitors but activated by CXCL11 in malignant hemapoietic cells, leading to phosphorylation of ERK1/2 (MAPK3/MAPK1) and enhanced cell adhesion and migration. Plays a regulatory role in CXCR4-mediated activation of cell surface integrins by CXCL12. Required for heart valve development. Regulates axon guidance in the oculomotor system through the regulation of CXCL12 levels. This Rattus norvegicus (Rat) protein is Atypical chemokine receptor 3.